Here is a 10624-residue protein sequence, read N- to C-terminus: MNYRDKIQKFSIRKYTVGTFSTVIATLVFLGFNTSQAHAAETNQPASVVKQKQQSNNEQTENRESQVQNSQNSQNSQSLSATHENEQPNNSQANLVNQKVAQSSTTNDEQPASQNVNTKKDSATAATTQPDKEESKHKQNESQSANKNGNDNRAAHVENHEANVVTASDSSDNGNVQHDRNELQAFFDANYHDYRFIDRENADSGTFNYVKGIFDKINTLLGSNDPINNKDLQLAYKELEQAVALIRTMPQRQQTSRRSNRIQTRSVESRAAEPRSVSDYQNANSSYYVENANDGSGYPVGTYINASSKGAPYNLPTTPWNTLKASDSKEIALMTAKQTGDGYQWVIKFNKGHAPHQNMIFWFALPADQVPVGRTDFVTVNSDGTNVQWSHGAGAGANKPLQQMWEYGVNDPDRSHDFKIRNRSGQVIYSWPTVHVYSLEDLSRASDYFSEAGATPATKAFGRQNFEYINGQKPAESPGVPKVYTFIGQGDASYTISFKTQGPTVNKLYYAAGGRALEYNQLFMYSQLYVESTQDHQQRLNGLRQVVNRTYRIGTTKRVEVSQGNVQTKKVLESTNLNIDDFVDDPLSYVKTPSNKVLGFYPTNANTNAFRPGGVQELNEYQLSQLFTDQKLQEAARTRNPIRLMIGFDYPDGYGNSETLVPVNLTVLPEIQHNIKFFKNDDTQNIAEKPFSKQAGHPVFYVYAGNQGNASVNLGGSVTSIQPLRINLTSNENFTDKGWQITGIPRTLHIENSTNRTNNARERNIELVGNLLPGDYFGTIRFGRKEQLFEIRVKPHTPTITTTAEQLRGTALQKVPVNISGIPLDPSALVYLVAPTNQTTNGGSEADQIPSGYTILATGTPDGVHNTVTIRPQDYVVFIPPVGKQIRAVVYYNKVVASNMSNAVTILPDDIPPTINNPVGINAKYYRGDEVNFTMGVSDRHSGIKNTTITTLPSGWTSNLTKSDNKNGSLAITGRVSMNQAFNSDITFKVSATDNVNNTTNDSQSKHVSIHVGKISEDAHPIVLGNTEKVVVVNPTAVSNDEKQSIITAFMNKNQNIRGYLASTDPVTVDNNGNVTLHYRDGSSTTLDATNVMTYEPVVKSEYQTANAAKTATVTIAKGQSFNIGDIKQYFTLSNGQAIPNGTFTNITSDRTIPTAQEVSQMNAGTQLYHIVASNAYHKDTEDFYISLKIVDVKQPEGDQRVYRTSTYDLTTDEISKVKQAFINANRDVITLAEGDISVTNTPNGANVSTITVNINKGRLTKSFASNLANMNFLRWVNFPQDYTVTWTNAKIANRPTDGGLSWSDDHKSLIYRYDATLGTQITTNDILTMLKATTTVPGLRNNITGNEKAQAEAGGRPNYRTTGYSQSNATTDGQRQFTLNGQVIQILDIINPSNGYGGQPVTNSNTRANHSNSTVVNVNEPAANGAGAFTIDHVVKSNSTHNASDAVYKAQLYLTPYGPKQYVEHLNQNTGNTTDAINIYFVPSDLVNPTISVGNYTNHQVFSGETFTNTITANDNFGVQSVTVPNTSQITGTVDNNHQHVSATAPNVTSATSKTINLLATDTSGNTATTSFNVTVKPLRDKYRVGTSSTAANPVRIANISNNATVSQADQTTIINSLTFTSNAPNRNYATASANEITSKTVSNVSRTGNNANVTVTVTHQDGTTSTVTVPVKHVIPEIVAHSHYTVQGQDFPAGNGSSAADYFKLSNGSAIPDATITWVSGQAPNKDNTRIGEDITVTAHILIDGETTPITKTATYKVVRTVPKHVFETARGVLYPGVSDMYDAKQYVKPVNNSWSTNAQHMNFQFVGTYGPNKDVVGISTRLIRVTYDNRQTEDLTILSKVKPDPPRIDANSVTYKAGLTNQEIKVNNVLNNSSVKLFKADNTPLNVTNITHGSGFSSVVTVSDALPNGGIKAKSSISMNNVTYTTQDEHGQVVTVTRNESVDSNDSASVTVTPQLQATTEGAVFIKGGDGFDFGHVERFIQNPPHGATVAWHDSPDTWKNTVGNTHKTAVVTLPSGQGTRNVEVPVKVYPVANAKAPSRDVKGQNLTHGTNAIDYITFDPNTNTNGITAAWANRQQPNNQQAGVQHLNVDVTYPGISAAKRVPVTVNVYQFEFPQTTYTTTVGGTLASGTQASGYAHMQNASGLPTDGFTYKWNRDTTGTNDANWAAMNKPNTAQVVNAKYDVIYNGHTFATSLPAKFVVKDVQPAKPTVTETAAGAITIAPGANQTVNTHAGNVTTYADKLVIKRNGNVVTTFTRRNNTSPWVKEASADNVTGIVGTNNGITVAAGTFNPADTIQVVATQGSGETISDEQRSDDFTVVAPQPNQATTKIWQNGHIDITPNNPSGHLINPTQAMDIAYTEKVGNGAEHSKTINVVRGQNNQWTIANKPDYVTLDAQTGKVTFNANTIKPNSSITITPKAGTGHSVSSNPSTLTAPAAHTVNTTEIVKDYGSNVTAAEINNAVQVANKRTATIKNGTAMPTNLAGGSTTTIPVTVTYNDGSTEEVQESIFTKADKRELITAKNHLDDPVSTEGKKPGTITQYNNAMHNAQQQINTAKTEAQQVINNERATPQQVSDALTKVRAAQTKIDQAKALLQNKEDNSQLVTSKNNLQSSVNQVPSTAGMTQQSIDNYNAKKREAETEITAAQRVIDNGDATAQQISDEKHRVDNALTALNQAKHDLTADTHALEQAVQQLNRTGTTTGKKPASITAYNNSIRALQSDLTSAKNSANAIIQKPIRTVQEVQSALTNVNRVNERLTQAINQLVPLADNSALRTAKTKLDEEINKSVTTDGMTQSSIQAYENAKRAGQTETTNAQNVINNGDATDQQIAAEKTKVEEKYNSLKQAIAGLTPDLAPLQTAKTQLQNDIDQPTSTTGMTSASVAAFNDKLSAARTKIQEIDRVLASHPDVATIRQNVTAANAAKTALDQARNGLTVDKAPLENAKNQLQHSIDTQTSTTGMTQDSINAYNAKLTAARNKVQQINQVLAGSPTVDQINTNTSAANQAKSDLDHARQALTPDKAPLQNAKTQLEQSINQPTDTTGMTTASLNAYNQKLQAARQKLTEINQVLNGNPTVQNINDKVAEANQAKDQLNTARQGLTLDRQPALTTLHGASNLNQAQQNNFTQQINAAQNHAALETIKSNITALNTAMTKLKDSVADNNTIKSGQNYTDATPANKQAYDNAVNAAKGVIGETTNPTMDVNTVNQKAASVKSTKDALDGQQNLQRAKTEATNAITHASDLNQAQKNALTQQVNSAQNVQAVNDIKQTTQSLNTAMTGLKRGVANHNQVVQSDNYVNADTNKKNDYNNAYNHANDIINGNAQHPVITPSDVNNALSNVTSKEHALNGEAKLNAAKQEANTALGHLNNLNNVQRQNLQSQINGAHQIDAVNTIKQNATNLNSAMGNLRQAVADKDQVKRTEDYADADTAKQNAYNSAVSSAETIINQTANPTMSVDDVNRATSAVTTNKSALNGDEKLVQSKTDAARAIDALPHLNNAQKADVKSKINAASNIAGVNTVKQQGTDLNTAMGNLQGAINDEQTTLNSQNYQDATPSKKTAYTNAVQAAKDILNKSNGQNKTKDQVTEAMNQVNSAKNNLDGTRLLDQAKQTAKQQLNNMTHLTTAQKTNLTNQINSGTTVAGVHTVQSNANTLDQAMNTLRQSIANNDATKASEDYVDANNDKQTAYNNAVAAAETIINANSNPEMNPSTITQKAEQVNSSKTALNGDENLATAKQNAKTYLNTLTSITDAQKNNLISQISSATRVSGVDTVKQNAQHLDQAMANLQNGINNESQVKSSEKYRDADTNKQQEYDNAITAAKAILNKSTGPNTAQNAVEAALQRVNTAKDALNGDAKLIAAQNAAKQHLGTLTHITTAQRNDLTNQISQATNLAGVESVKQSANSLDGAMGNLQTAINDKSGTLASQNFLDADEQKRNAYNQAISAAETILNKQTGPNTAKTAVEQALNNVNSAKHALNGTQNLNNAKQAAITAINGASDLNQKQKDALKAQANGAQRVSNANDVQRNATELNTAMGQLQHAIADKTNTLASSKYVNADSTKQNAYTTKVTNAEHIISGTPTVVTTPSEVTAAANQVNSAKQELNGDERLRVAKQNANTAIDALTQLNTPQKAKLKEQVGQANRLEDVQSVQTNGQSLNNAMKGLRYSIANETTVKASQNYTDASPNNQSTYNSAVSNAKGIINQTNNPTMDTSAITQATTQVNNAKNGLNGAENLRNAQNTAKQNLNTLSHLTNNQKSAISSQIDRAGHVSEVTAAKNAATELNAQMGNLEQAIHDQNTVKQGVNFTDADKAKRDAYTNAVSRAETILNKTQGANTSKQDVEAAIQNVTSAKNALNGDQNVTNAKNAAKNALNNLTSINNAQKRDLTTKIDQATTVAGVEAVSNTGTQLNTAMANLQNGINDKANTLASENYHDADSDKKTAYTQAVTNAENILNKNSGSNLDKAAVENALSQVTNAKGALNGNHNLEQAKSNANTTINGLQHLTTAQKDKLKQQVQQAQNVAGVDTVKSSANTLNGAMGTLRNSIQDNTATKNGQNYLDATERNKTNYNNAVDSANGVINATSNPNMDANAINQIATQVTSTKNALDGTHNLTQAKQTATNAIDGATNLNKAQKDALKAQVTSAQRVANVTSIQQTANELNTAMGQLQHGIDDENATKQTQKYRDAEQSKKTAYDQAVAAAKAILNKQTGSNSDKAAVDRALQQVTSTKDALNGDAKLAEAKAAARQNLGTLNHITNAQRTALEGQINQATTVDGVNTVKTNANTLDGAMNSLQGAINDKDATLRNQNYLDADESKRNAYTQAVTAAEGILNKQTGGNTSKADVDNALNAVTRAKAALNGAENLRNAKTSATNTINGLPNLTQLQKDNLKHQVEQAQNVVGVNGVKDKGNTLNTAMGALRTSIQNDNTTKTSQNYLDASDSNKNNYNTAVNNANGVINATNNPNMDANAINDMANQVNTTKAALNGAQNLAQAKTNATNTINNAQDLNQKQKDALKTQVNNAQRVSDANNVQHTATELNGAMTALKAAIADKERTKASGNYVNADQEKRQAYDSKVTNAENIINGTPNATLTVNDVNSAASQVNAAKTALNGDNNLRVAKEHANNTIDGLAQLNNVQKAKLKEQVQSATTLDGVQTVKNSSQTLNTAMKGLRDSIANEATIKAGQNYTDASPNNRNEYDSAVTAAKAIINQTSNPTMEPNTITQATSQVTTKEHALNGAQNLAQAKTTAKNNLNNLTSINNAQKDALTRNIDGATTVAGVNQETAKATELNNAMHSLQNGINDETQTKQTQKYLDAEPSKKSAYDQAVNAAKAILTKASGQNVDKAAVEQALQNVNSTKTALNGDAKLNEAKAAAKQTLGTLTHINNAQRNALDNEITQATNVEGVNTVKAKAQQLDGAMGQLETSIRDKDTTLQSQNYQDADDAKRTAYSQAVNAAATILNKTAGGNTPKADVERAMQAVTQANTALNGIQNLERAKQAANTAITNASDLNTKQKEALKAQVTSAGRVSAANGVEHTATELNTAMTALKRAIADKADTKASGNYVNADANKRQAYDEKVTAAEHIVSGTPTPTLTPSDVTNAATQVTNAKTQLNGNHNLEVAKQNANTAIDGLTSLNGPQKAKLKEQVGQATTLPNVQTVRDNAQTLNTAMKGLRDSIANEATIKAGQNYTDASQNKQNDYNNAVTAAKAIIGQTTSPSMIAQEINQAKDQVTAKQQALNGQENLRTAQTNAKQHLNGLSDLTNAQKDAAKRQIEGATHVNEVTQAQNNADALNTAMTNLKNGIQDQNTIKQGVNFTDADEAKRNAYTNAVTQAEQILNKAQGPNTAKDGVETALQNVQRAKNELNGNQNVANAKTTAKNALNNLTSINNAQKAALKSQIEGATTVAGVNQVSTMASELNTAMSNLQRGINDEAATKAAQKYTEADRDKQTAYNDAVTAAKTLLDKTAGSNDNKVAVEQALQRVNTAKTALNGDARLNEAKNTAKQQLATMSHLTNAQKANLTEQIERGTTVAGVQGIQANAGTLNQAMNQLRQSIASKDATKSSEDYQDANADLQNAYNDAVTNAEGIISATNNPEMNPDTINQKASQVNSAKSALNGDEKLAAAKQTAKSDIGRLTDLNNAQRTAANAEVDQAPNLAAVTAAKNKATSLNTAMGNLKHALAEKDNTKRSVNYTDADQPKQQAYDTAVTQAEAITNANGSNANETQVQAALNQLNQAKNDLNGDNKVAQAKETAKRALASYSNLNNAQSTAATSQIDNATTVADVTAAQNTANELNTAMGQLQNGINDQNTVKQQVNFTDADQGKKDAYTNAVTNAQGILDKANGQNMTKAQVEAALNQVTTAKNALNGDANVRQAKSDAKANLGTLTHLNNAQKQDLTSQIEGATTVNGVNSVKTKAQDLDGAMQRLESAIANKDQTKASENYIDADPTKKTAFDNAITQAESYLNKDHGTNKDKQAVEQAIQSVTSTENALNGDANLQCAKTEATQAIDNLTQLNTPQKTALKQQVNAAQRVSGVTDLKNSATSLNNAMDQLKQAIGDHDTIVAGGNYTNASPDKQGAYTDAYNAAKNIVNGSPNVITNAADVTAATQRVNNAETSLNGDTNLATAKQQAKDALRQMTHLSDAQKQSITGQIDSATQVTGVQSVKDNATNLDNAMNQLRNSIANKDEVKASQPYVDADTDKQNAYNTAVTSAENIINATSQPTLDPSAVTQAANQVNTNKTALNGAQNLANKKQETTANINRLSHLNNAQKQDLNTQVTNAPNISTVNQVKTKAEQLDQAMERLINGIQDKDQVKQSVNFTDADPEKQTAYNNAVTAAENIINQANGTNANQSQVEAALSTVTTTKQALNGDRKVTDAKNNANQTLSTLDNLNNAQKGAVTGNINQAHTVAEVTQAIQTAQELNTAMGNLKNSLNDKDTTLGSQNFADADPEKKNAYNEAVRNAENILNKSTGTNVPKDQVEAAMNQVNTTKAALNGTQNLEKAKQHANTAIDGLSHLTNAQKEALKQLVQQSTTVAEAQGNEQKANNVDAAMDKLRQSIADNATTKQNQNYTDASPNKKDAYNNAVTTAQGIIDQTTNPSLDPTVINQAAGQVSTSKNALNGNENLEAAKQQATQSLGSLDNLNNAQKQAVTNQINGAHTVDEANQIKQNAQNLNTAMGNLKQAIADKDATKATVNFTDADQAKQQAYNTAVTNAENIISKANGGNATQTEVEQAIQQVNAAKQALNGNANVQHAKDEATALINNSNDLNQAQKDALKQQVQNATTVAGVNNVKQTAQELNNAMTQLKQGIADKEQTKADGNFVNADSDKQNAYNQAVAKAEALISGTPDVVVTPSEITAALNKVTQAKNDLNGNTNLATAKQNVQHAIDQLPNLNQAQRDEYSKQITQATLVPNVNAIQQAATTLNDAMTQLKQGIANKAQIKGSENYHDADTDKQTAYDNAVTKAEELLKQTTNPTMDPNTIQQALTKVNDTNQALNGNQKLADAKQDAKTTLGTLDHLNDAQKQALTTQVEQAPDIATVNNVKQNAQNLNNAMTNLNNALQDKTETLNSINFTDADQAKKDDYTNAVSHAEGILSKANGSNASQTEVEQAMQRVNEAKQALNGNDNVQRAKDAAKQVITNANDLNQAQKDALKQQVDAAQTVANVNTIKQTAQDLNQAMTQLKQGIADKDQTKANGNFVNADTDKQNAYNNAVAHAEQIISGTPNANVDPQQVAQALQQVNQAKGDLNGNHNLQVAKDNANTAIDQLPNLNQPQKTALKDQVSHAELVTGVNAIKQNADALNNAMGTLKQQIQANSQVPQSVDFTQADQDKQQAYNNAANQAQQIANGTPTPVLAPDTVTKAVTTMNQAKDALNGDEKLAQAKQDALANLDTLRDLNQPQRDALRNQINQAQALATVEQTKQNAQNVNTAMGNLKQGIANKDTVKASENYHDADVDKQTAYTNAVSQAEGIINQTTNPTLNPDDITRALTQVTDAKNSLNGEAKLATEKQNAKDAVSGMTHLNDAQKQALKGQIDQSPEIATVNQVKQTATSLDQAMDQLSQAINDKDQILADGNYLNADPDKQNAYKQAVAKAEALLNKQSGTNEVQAQVESITNEVNAAKQALNGNDNLANAKQQAKQQLANLTHLNDAQKQSFESQITQAPLVTDVTTINQKAQTLDHAMELLRNSVADNQTTLASEDYHDATAQRQNDYNKAVTAANNIINQTTSPTMNPDDVNGATTQVNNTKVALDGDENLAAAKQQANNRLDQLDHLNNAQKQQLQSQITQSSDIAAVNGHKQTAESLNTAMGNLINAIADHQAVEQRGNFINADTDKQTAYNTAVNEAAAMINKQTGQNANQTEVEQAITKVQTTLQALNGDHNLQVAKTNATQAIDALTSLNDPQKTALKDQVTAATLVTAVHQIEQNANTLNQAMHGLRQSIQDNAATKANSKYINEDQPEQQNYDQAVQAANNIINEQTATLDNNAINQVAATVNTTKAALHGDVKLQNDKDHAKQTVSQLAHLNNAQKHMEDTLIDSETTRTAVKQDLTEVQALDQLMDALQQSIADKDATRASSAYVNAEPNKKQAYDEAVQNAESIIAGLNNPTINKGNVSSATQAVISSKNALDGVERLAQDKQTAGNSLNHLDQLTPAQQQALENQINNATTRDKVAEIIAQAQALNEAMKALKESIKDQPQTEASSKFINEDQAQKDAYTQAVQHAKDLINKTTDPTLAKSIIDQATQAVTDAKNNLHGDQKLAQDKQRATETLNNLSNLNTPQRQALENQINNAATRGEVAQKLTEAQALNQAMEALRNSIQDQQQTESGSKFINEDKPQKDAYQAAVQNAKDLINQTGNPTLDKAQVEQLTHAFKQAKDNLHGDQKLADDKQHAVTDLNQLNGLNNPQRQALESQINNAATRGEVAQKLAEAKALDQAMQALRNSIQDQQQTEAGSKFINEDKPQKDAYQAAVQNAKDLINQTGNPTLDKSQVEQLTQAVTTAKDNLHGDQKLARDQQQAVTTVNALPNLNHAQQQTLTDAINAAPTRTEVAQHVQTATELDHAMETLKNKVDQVNTDKAQPNYTEASTDKKEAVDQALQAAQSITDPTNGSNANKDAVEQALTKLQEKVNELNGNERVAEAKTQAKQTIDQLTHLNADQIATAKQNIDQATKLQPIAELVDQATQLNQSMDQLQQAVNEHANVEQTIDYTQADSDKQKAYKQAIADAENVLKQNANKQQVDQALQNILNAKQALNGDERVALAKTNGKHDIDQLNALNNAQQDGFKGRIDQSNDLNQIQQIVDEAKALNRAMDQLSQEITGNEGRTKGSTNYVNADTQVKQVYDEAVDKAKQALDKSSGQNLTAEQVIKLNDAVTAAKKALNGEERLNNRKAEALQRLDQLTHLNNAQRQLAIQQINNAETLNKASRAINRATKLDNAMGAVQQYIDEQHLGVISSTNYINADDNLKANYDNAIANAAHELDKVQGNAIAKAEAEQLKQNIIDAQNALNGDQNLANAKDKANAFVNSLNGLNQQQQDLAHKAINNADTVSDVTDIVNNQIDLNDAMETLKHLVDNEIPNAEQTVNYQNADDNAKTNFDDAKRLANTLLNSDNTNVNDINGAIQAVNDAIHNLNGDQRLQDAKDKAIQSINQALANKLKEIEASNATDQDKLIAKNKAEELANSIINNINKATSNQAVSQVQTAGNHAIEQVHANEIPKAKIDANKDVDKQVQALIDEIDRNPNLTDKEKQALKDRINQILQQGHNDINNALTKEEIEQAKAQLAQALQDIKDLVKAKEDAKQDVDKQVQALIDEIDQNPNLTDKEKQALKDRINQILQQGHNGINNAMTKEEIEQAKAQLAQALKEIKDLVKAKENAKQDVDKQVQALIDEIDQNPNLTDKEKQALKDRINQILQQGHNDINNAMTKEEIEQAKAQLAQALQDIKDLVKAKEDAKNAIKALANAKRDQINSNPDLTPEQKAKALKEIDEAEKRALQNVENAQTIDQLNRGLNLGLDDIRNTHVWEVDEQPAVNEIFEATPEQILVNGELIVHRDDIITEQDILAHINLIDQLSAEVIDTPSTATISDSLTAKVEVTLLDGSKVIVNVPVKVVEKELSVVKQQAIESIENAAQQKIDEINNSVTLTLEQKEAAIAEVNKLKQQAIDHVNNAPDVHSVEEIQQQEQAYIEQFNPEQFTIEQAKSNAIKSIEDAIQHMIDEIKARTDLTDKEKQEAIAKLNQLKEQAIQAIQRAQSISEITEQLEQFKAQMKAANPTAKELAKRKQEAISRIKDFSNEKINSIRNSEIGTADEKQAAMNQINEIVLETIRDINNAHTLQQVEAALNNGIARISAVQIVISDRAKQSSSTGNESNSHLTIGYGTANHPFNSSTIGHKKKLDEDDDIDPLHMRHFSNNFGNVIKNAIGVVGISGLLASFWFFIAKRRRKEDEEEELEIRDNNKDSIKETLDDTKHLPLLFAKRRRKEDEEDVTVEEKDSLNNGESLDKVKHTPFFLPKRRRKEDEEDVEVTNENTDEKVLKDNEHSPLLFAKRRKDKEEDVETTTSIESKDEDVPLLLAKKKNQKDNQSKDKKSASKNTSKKVAAKKKKKKSKKNKK.

The first 39 residues, 1-39 (MNYRDKIQKFSIRKYTVGTFSTVIATLVFLGFNTSQAHA), serve as a signal peptide directing secretion. A compositionally biased stretch (polar residues) spans 41-59 (ETNQPASVVKQKQQSNNEQ). 4 disordered regions span residues 41–152 (ETNQ…GNDN), 250–277 (PQRQ…PRSV), 1347–1372 (NEKA…NATT), and 2418–2438 (TITP…TLTA). The span at 65-78 (SQVQNSQNSQNSQS) shows a compositional bias: low complexity. Polar residues predominate over residues 79–117 (LSATHENEQPNNSQANLVNQKVAQSSTTNDEQPASQNVN). Residues 130–140 (PDKEESKHKQN) are compositionally biased toward basic and acidic residues. 4 stretches are compositionally biased toward polar residues: residues 141-151 (ESQSANKNGND), 250-266 (PQRQ…QTRS), 1360-1372 (YRTT…NATT), and 2427-2438 (HSVSSNPSTLTA). FIVAR domains follow at residues 2524-2580 (AKNH…VSDA), 2610-2666 (SKNN…ISDE), 2687-2750 (DTHA…VQSA), 2780-2836 (AKTK…IAAE), 2864-2919 (AKTQ…IRQN), 2947-3002 (AKNQ…INTN), 3030-3085 (AKTQ…INDK), 3154-3212 (AMTK…VNQK), 3280-3339 (AMTG…VNNA), 3407-3465 (AMGN…VNRA), 3533-3591 (AMGN…VTEA), 3659-3717 (AMNT…ITQK), 3785-3843 (AMAN…VEAA), 3911-3969 (AMGN…VEQA), 4037-4095 (AMGQ…VTAA), 4163-4221 (AMKG…ITQA), 4289-4347 (QMGN…VEAA), 4415-4473 (AMAN…VENA), 4541-4599 (AMGT…INQI), 4667-4725 (AMGQ…VDRA), 4793-4851 (AMNS…VDNA), 4919-4977 (AMGA…INDM), 5045-5103 (AMTA…VNSA), 5171-5229 (AMKG…ITQA), 5297-5355 (AMHS…VEQA), 5423-5481 (AMGQ…VERA), 5549-5607 (AMTA…VTNA), 5675-5733 (AMKG…INQA), 5801-5859 (AMTN…VETA), 6053-6111 (AMNQ…INQK), 6179-6236 (AMGN…VQAA), 6304-6362 (AMGQ…VEAA), 6430-6488 (AMQR…VEQA), 6556-6614 (AMDQ…VTAA), 6682-6740 (AMNQ…VTQA), 6808-6866 (AMER…VEAA), 6934-6992 (AMGN…VEAA), 7060-7118 (AMDK…INQA), 7186-7244 (AMGN…VEQA), 7312-7370 (AMTQ…ITAA), 7438-7496 (AMTQ…IQQA), 7564-7622 (AMTN…VEQA), 7690-7748 (AMTQ…VAQA), 7816-7874 (AMGT…VTKA), 7942-8000 (AMGN…ITRA), 8068-8129 (AMDQ…ITNE), 8194-8252 (AMEL…VNGA), 8320-8378 (AMGN…VEQA), 8446-8503 (AMHG…INQV), 8571-8629 (LMDA…VSSA), 8697-8755 (AMKA…IDQA), 8823-8881 (AMEA…VEQL), 8949-9007 (AMQA…VEQL), 9075-9133 (AMET…VEQA), 9201-9255 (SMDQ…VDQA), 9323-9382 (AMDQ…VIKL), and 9577-9633 (AMET…INGA). Residues 10430 to 10450 (IKNAIGVVGISGLLASFWFFI) traverse the membrane as a helical segment. A disordered region spans residues 10527 to 10624 (RRKEDEEDVE…KKKKSKKNKK (98 aa)). Composition is skewed to basic and acidic residues over residues 10542-10552 (TDEKVLKDNEH) and 10591-10601 (QKDNQSKDKKS). Basic residues predominate over residues 10606 to 10624 (TSKKVAAKKKKKKSKKNKK).

The protein localises to the cell membrane. The chain is Extracellular matrix-binding protein ebh (ebh) from Staphylococcus aureus (strain JH1).